A 289-amino-acid polypeptide reads, in one-letter code: Pantothenate synthetase (289 aa).

28–35 contributes to the ATP binding site; sequence MGCLHEGH. Residue H35 is the Proton donor of the active site. Q59 lines the (R)-pantoate pocket. Q59 is a binding site for beta-alanine. 147 to 150 serves as a coordination point for ATP; sequence GLKD. Q153 lines the (R)-pantoate pocket. ATP contacts are provided by residues V176 and 184 to 187; that span reads MSSR.

It belongs to the pantothenate synthetase family. In terms of assembly, homodimer.

It is found in the cytoplasm. It carries out the reaction (R)-pantoate + beta-alanine + ATP = (R)-pantothenate + AMP + diphosphate + H(+). The protein operates within cofactor biosynthesis; (R)-pantothenate biosynthesis; (R)-pantothenate from (R)-pantoate and beta-alanine: step 1/1. In terms of biological role, catalyzes the condensation of pantoate with beta-alanine in an ATP-dependent reaction via a pantoyl-adenylate intermediate. This chain is Pantothenate synthetase, found in Magnetococcus marinus (strain ATCC BAA-1437 / JCM 17883 / MC-1).